We begin with the raw amino-acid sequence, 126 residues long: Small ribosomal subunit protein uS13 (126 aa).

The tract at residues 95–126 (NLPVHGQRTHTNARTRKGPRRAIAGKKKAGKK) is disordered.

The protein belongs to the universal ribosomal protein uS13 family. Part of the 30S ribosomal subunit. Forms a loose heterodimer with protein S19. Forms two bridges to the 50S subunit in the 70S ribosome.

Its function is as follows. Located at the top of the head of the 30S subunit, it contacts several helices of the 16S rRNA. In the 70S ribosome it contacts the 23S rRNA (bridge B1a) and protein L5 of the 50S subunit (bridge B1b), connecting the 2 subunits; these bridges are implicated in subunit movement. Contacts the tRNAs in the A and P-sites. The protein is Small ribosomal subunit protein uS13 of Frankia casuarinae (strain DSM 45818 / CECT 9043 / HFP020203 / CcI3).